An 806-amino-acid polypeptide reads, in one-letter code: Lon protease (806 aa).

One can recognise a Lon N-terminal domain in the interval 14 to 207; sequence YPVLPLRDIV…KALGFMEGEI (194 aa). 359 to 366 is a binding site for ATP; it reads GPPGVGKT. The Lon proteolytic domain occupies 594–775; sequence DDQVGVVTGL…GEVIAHALLR (182 aa). Residues Ser-681 and Lys-724 contribute to the active site. The tract at residues 786-806 is disordered; it reads SQPAALPSVDSQDEAGTSIAH.

The protein belongs to the peptidase S16 family. As to quaternary structure, homohexamer. Organized in a ring with a central cavity.

It is found in the cytoplasm. The catalysed reaction is Hydrolysis of proteins in presence of ATP.. ATP-dependent serine protease that mediates the selective degradation of mutant and abnormal proteins as well as certain short-lived regulatory proteins. Required for cellular homeostasis and for survival from DNA damage and developmental changes induced by stress. Degrades polypeptides processively to yield small peptide fragments that are 5 to 10 amino acids long. Binds to DNA in a double-stranded, site-specific manner. In R.meliloti it is important for controlling the turnover of a constitutively expressed protein(s) that, when unregulated, disrupts normal nodule formation and normal growth. The sequence is that of Lon protease from Rhizobium meliloti (strain 1021) (Ensifer meliloti).